The following is a 128-amino-acid chain: Nanos homolog 1 (128 aa).

The tract at residues 7-23 is essential for its translational repressor activity; that stretch reads FDSWSDYLGLSSLISRG. The disordered stretch occupies residues 23-56; the sequence is GLQPRGEGENPSPRWNVSCPAPAEPLPSKEPEGR. The Nanos-type zinc finger occupies 60-114; the sequence is GCGFCRSNKEAMSLYSSHRLRSLDGRVLCPVLRGYTCPLCGANGDWAHTMRYCPL. Zn(2+) contacts are provided by cysteine 61, cysteine 64, histidine 77, cysteine 88, cysteine 96, cysteine 99, histidine 107, and cysteine 112. 2 consecutive short sequence motifs (C2HC) follow at residues 61–88 and 96–112; these read CGFC…RVLC and CPLC…MRYC.

It belongs to the nanos family. Interacts with ccnb1.

It localises to the cytoplasm. The protein localises to the perinuclear region. In terms of biological role, acts as a translational repressor. Can mediate repression affecting different steps in the translation process: cap-driven, IRES-driven, polyadenylated RNAs or nonpolyadenylated RNAs. Essential for the development of primordial germ cells (PGCs) by ensuring their proper migration and survival. This chain is Nanos homolog 1 (nanos1), found in Xenopus borealis (Kenyan clawed frog).